We begin with the raw amino-acid sequence, 488 residues long: Protein nucleotidyltransferase YdiU (488 aa).

ATP is bound by residues G91, G93, R94, K114, D126, G127, R177, and R184. The active-site Proton acceptor is D253. Mg(2+) is bound by residues N254 and D263. Residue D263 coordinates ATP.

Belongs to the SELO family. The cofactor is Mg(2+). Mn(2+) serves as cofactor.

The enzyme catalyses L-seryl-[protein] + ATP = 3-O-(5'-adenylyl)-L-seryl-[protein] + diphosphate. It carries out the reaction L-threonyl-[protein] + ATP = 3-O-(5'-adenylyl)-L-threonyl-[protein] + diphosphate. It catalyses the reaction L-tyrosyl-[protein] + ATP = O-(5'-adenylyl)-L-tyrosyl-[protein] + diphosphate. The catalysed reaction is L-histidyl-[protein] + UTP = N(tele)-(5'-uridylyl)-L-histidyl-[protein] + diphosphate. The enzyme catalyses L-seryl-[protein] + UTP = O-(5'-uridylyl)-L-seryl-[protein] + diphosphate. It carries out the reaction L-tyrosyl-[protein] + UTP = O-(5'-uridylyl)-L-tyrosyl-[protein] + diphosphate. Nucleotidyltransferase involved in the post-translational modification of proteins. It can catalyze the addition of adenosine monophosphate (AMP) or uridine monophosphate (UMP) to a protein, resulting in modifications known as AMPylation and UMPylation. This Bacillus cereus (strain ZK / E33L) protein is Protein nucleotidyltransferase YdiU.